We begin with the raw amino-acid sequence, 87 residues long: uncharacterized protein (87 aa).

Residues 21 to 41 (LSSSLYSVAFFLFFFPNFLFF) traverse the membrane as a helical segment.

The protein localises to the membrane. This is an uncharacterized protein from Saccharomyces cerevisiae (strain ATCC 204508 / S288c) (Baker's yeast).